Consider the following 207-residue polypeptide: Large ribosomal subunit protein uL3 (207 aa).

Residues 129 to 152 are disordered; it reads AGGPAGHGSRFQRHPGSIGSNTTP.

Belongs to the universal ribosomal protein uL3 family. Part of the 50S ribosomal subunit. Forms a cluster with proteins L14 and L19.

One of the primary rRNA binding proteins, it binds directly near the 3'-end of the 23S rRNA, where it nucleates assembly of the 50S subunit. This chain is Large ribosomal subunit protein uL3, found in Leptospira biflexa serovar Patoc (strain Patoc 1 / ATCC 23582 / Paris).